Here is a 444-residue protein sequence, read N- to C-terminus: Exodeoxyribonuclease 7 large subunit (444 aa).

It belongs to the XseA family. As to quaternary structure, heterooligomer composed of large and small subunits.

It localises to the cytoplasm. The enzyme catalyses Exonucleolytic cleavage in either 5'- to 3'- or 3'- to 5'-direction to yield nucleoside 5'-phosphates.. Functionally, bidirectionally degrades single-stranded DNA into large acid-insoluble oligonucleotides, which are then degraded further into small acid-soluble oligonucleotides. This Xylella fastidiosa (strain 9a5c) protein is Exodeoxyribonuclease 7 large subunit.